The sequence spans 340 residues: Coproporphyrin III ferrochelatase (340 aa).

Fe-coproporphyrin III is bound by residues serine 52 and tyrosine 121. Positions 181 and 264 each coordinate Fe(2+).

This sequence belongs to the ferrochelatase family.

The protein localises to the cytoplasm. The catalysed reaction is Fe-coproporphyrin III + 2 H(+) = coproporphyrin III + Fe(2+). Its pathway is porphyrin-containing compound metabolism; protoheme biosynthesis. Involved in coproporphyrin-dependent heme b biosynthesis. Catalyzes the insertion of ferrous iron into coproporphyrin III to form Fe-coproporphyrin III. This Mycolicibacterium smegmatis (strain ATCC 700084 / mc(2)155) (Mycobacterium smegmatis) protein is Coproporphyrin III ferrochelatase.